Here is a 249-residue protein sequence, read N- to C-terminus: Segregation and condensation protein A (249 aa).

This sequence belongs to the ScpA family. In terms of assembly, component of a cohesin-like complex composed of ScpA, ScpB and the Smc homodimer, in which ScpA and ScpB bind to the head domain of Smc. The presence of the three proteins is required for the association of the complex with DNA.

The protein resides in the cytoplasm. Participates in chromosomal partition during cell division. May act via the formation of a condensin-like complex containing Smc and ScpB that pull DNA away from mid-cell into both cell halves. This is Segregation and condensation protein A from Listeria monocytogenes serotype 4b (strain CLIP80459).